Reading from the N-terminus, the 795-residue chain is Mitochondrial inner membrane m-AAA protease component paraplegin (795 aa).

The transit peptide at 1–43 (MAVLLLLLRALRRGPGPGPRPLWGPGPAWSPGFPARPGRGRPY) directs the protein to the mitochondrion. The propeptide at 44–105 (MASRPPGDLA…GGTFYFNTSR (62 aa)) is removed in mature form. The Mitochondrial matrix segment spans residues 106–144 (LKQKNKEKDKSKGKAPEEDEEERRRRERDDQMYRERLRT). Residues 108 to 133 (QKNKEKDKSKGKAPEEDEEERRRRER) are disordered. The span at 109–133 (KNKEKDKSKGKAPEEDEEERRRRER) shows a compositional bias: basic and acidic residues. Residues 145-165 (LLVIAVVMSLLNALSTSGGSI) traverse the membrane as a helical segment. Residues 166–248 (SWNDFVHEML…DRIPVSYKRT (83 aa)) lie on the Mitochondrial intermembrane side of the membrane. Residues 249–269 (GFFGNALYSVGMTAVGLAILW) form a helical membrane-spanning segment. Over 270 to 795 (YVFRLAGMTG…LGGEEPTWPK (526 aa)) the chain is Mitochondrial matrix. ATP contacts are provided by Ala-312, Gly-352, Cys-353, Gly-354, Lys-355, Thr-356, and Leu-357. A 3'-nitrotyrosine modification is found at Tyr-505. Position 574 (His-574) interacts with Zn(2+). Residue Glu-575 is part of the active site. 2 residues coordinate Zn(2+): His-578 and Asp-650. Positions 701–795 (HEARLLVAKA…LGGEEPTWPK (95 aa)) are interaction with PPIF. Positions 751–795 (PHGPKKMIAPQRWIDAQREKQDLGEEETEETQQPPLGGEEPTWPK) are disordered.

It in the N-terminal section; belongs to the AAA ATPase family. This sequence in the C-terminal section; belongs to the peptidase M41 family. Forms heterooligomers with AFG3L2; the m-AAA protease is composed of heterohexamers of AFG3L2 and SPG7. Component of the mitochondrial permeability transition pore complex (mPTPC), at least composed of SPG7, VDAC1 and PPIF. Interacts with MAIP1. The cofactor is Zn(2+). In terms of processing, upon import into the mitochondrion, the N-terminal transit peptide is cleaved by the mitochondrial-processing peptidase (MPP) to generate an intermediate form which undergoes a second proteolytic cleavage mediated by proteases AFG3L2 removing an additional N-terminal fragment to generate the proteolytically active mature form. Ubiquitous.

The protein resides in the mitochondrion inner membrane. The catalysed reaction is ATP + H2O = ADP + phosphate + H(+). Catalytic component of the m-AAA protease, a protease that plays a key role in proteostasis of inner mitochondrial membrane proteins, and which is essential for axonal and neuron development. SPG7 possesses both ATPase and protease activities: the ATPase activity is required to unfold substrates, threading them into the internal proteolytic cavity for hydrolysis into small peptide fragments. The m-AAA protease exerts a dual role in the mitochondrial inner membrane: it mediates the processing of specific regulatory proteins and ensures protein quality control by degrading misfolded polypeptides. Mediates protein maturation of the mitochondrial ribosomal subunit MRPL32/bL32m by catalyzing the cleavage of the presequence of MRPL32/bL32m prior to assembly into the mitochondrial ribosome. Acts as a regulator of calcium in neurons by mediating degradation of SMDT1/EMRE before its assembly with the uniporter complex, limiting the availability of SMDT1/EMRE for MCU assembly and promoting efficient assembly of gatekeeper subunits with MCU. Also regulates mitochondrial calcium by catalyzing degradation of MCU. Plays a role in the formation and regulation of the mitochondrial permeability transition pore (mPTP) and its proteolytic activity is dispensable for this function. The sequence is that of Mitochondrial inner membrane m-AAA protease component paraplegin from Homo sapiens (Human).